The chain runs to 271 residues: Type III pantothenate kinase (271 aa).

6 to 13 (DVRNTNIV) provides a ligand contact to ATP. 109-112 (GADR) is a binding site for substrate. Asp111 functions as the Proton acceptor in the catalytic mechanism. Asp131 is a binding site for K(+). An ATP-binding site is contributed by Thr134. Thr186 is a substrate binding site.

The protein belongs to the type III pantothenate kinase family. In terms of assembly, homodimer. It depends on NH4(+) as a cofactor. The cofactor is K(+).

It localises to the cytoplasm. It carries out the reaction (R)-pantothenate + ATP = (R)-4'-phosphopantothenate + ADP + H(+). Its pathway is cofactor biosynthesis; coenzyme A biosynthesis; CoA from (R)-pantothenate: step 1/5. Catalyzes the phosphorylation of pantothenate (Pan), the first step in CoA biosynthesis. The chain is Type III pantothenate kinase from Rhodococcus opacus (strain B4).